The primary structure comprises 157 residues: Protein Smg (157 aa).

It belongs to the Smg family.

The protein is Protein Smg of Shigella boydii serotype 4 (strain Sb227).